Reading from the N-terminus, the 252-residue chain is 3-dehydroquinate dehydratase (252 aa).

3-dehydroquinate is bound by residues Glu-46–Arg-48 and Arg-82. His-143 functions as the Proton donor/acceptor in the catalytic mechanism. Lys-170 acts as the Schiff-base intermediate with substrate in catalysis. 3-dehydroquinate is bound by residues Arg-212, Ser-231, and Gln-235.

It belongs to the type-I 3-dehydroquinase family. In terms of assembly, homodimer.

The enzyme catalyses 3-dehydroquinate = 3-dehydroshikimate + H2O. It functions in the pathway metabolic intermediate biosynthesis; chorismate biosynthesis; chorismate from D-erythrose 4-phosphate and phosphoenolpyruvate: step 3/7. Involved in the third step of the chorismate pathway, which leads to the biosynthesis of aromatic amino acids. Catalyzes the cis-dehydration of 3-dehydroquinate (DHQ) and introduces the first double bond of the aromatic ring to yield 3-dehydroshikimate. This chain is 3-dehydroquinate dehydratase, found in Listeria innocua serovar 6a (strain ATCC BAA-680 / CLIP 11262).